A 670-amino-acid polypeptide reads, in one-letter code: Sodium/glucose cotransporter 2 (670 aa).

The Extracellular segment spans residues 1–20 (MEGHVEEGSELGEQKVLIDN). Residues 21-42 (PADILVIAAYFLLVIGVGLWSM) form a helical membrane-spanning segment. The Cytoplasmic portion of the chain corresponds to 43–61 (FRTNRGTVGGYFLAGRSMV). A helical transmembrane segment spans residues 62–83 (WWPVGASLFASNIGSGHFVGLA). 2 residues coordinate Na(+): Ala71 and Ile74. The Extracellular portion of the chain corresponds to 84–91 (GTGAASGL). The helical transmembrane segment at 92–112 (AVAGFEWNALFVVLLLGWLFV) threads the bilayer. The Cytoplasmic segment spans residues 113–134 (PVYLTAGVITMPQYLRKRFGGR). A helical transmembrane segment spans residues 135-164 (RIRLYLSVLSLFLYIFTKISVDMFSGAVFI). Residues 165-171 (QQALGWN) are Extracellular-facing. Transmembrane regions (helical) follow at residues 172-193 (IYAS…GGLA) and 194-215 (ALMY…ILTG). The Extracellular segment spans residues 216–273 (YAFHEVGGYSGLFDKYLGAVTSLTVSKDPAVGNISSTCYQPRPDSYHLLRDPVTGGLP). A glycan (N-linked (GlcNAc...) asparagine) is linked at Asn248. Disulfide bonds link Cys253–Cys509, Cys343–Cys349, Cys353–Cys359, and Cys515–Cys520. A helical membrane pass occupies residues 274-293 (WPALLLGLTIVSGWHWCSDQ). At 294–307 (VIVQRCLAGKNLTH) the chain is on the cytoplasmic side. A helical transmembrane segment spans residues 308–329 (IKAGCILCGYLKLMPMFLMVMP). The Extracellular portion of the chain corresponds to 330–373 (GMISRILYPDEVACVVPEVCKRVCGTEVGCSNIAYPRLVVKLMP). A helical membrane pass occupies residues 374–404 (NGLRGLMLAVMLAALMSSLASIFNSSSTLFT). Positions 387, 390, and 391 each coordinate Na(+). Residues 405 to 422 (MDIYTRLRPRAGDRELLL) are Cytoplasmic-facing. A helical membrane pass occupies residues 423–444 (VGRLWVVFIVAVSVAWLPVVQA). Residues 445 to 449 (AQGGQ) are Extracellular-facing. The helical transmembrane segment at 450–475 (LFDYIQSVSSYLAPPVSAVFVLALFV) threads the bilayer. The Cytoplasmic segment spans residues 476 to 480 (PRVNE). A helical transmembrane segment spans residues 481 to 503 (KGAFWGLIGGLLMGLARLIPEFF). Over 504–521 (FGTGSCVRPSACPAIFCR) the chain is Extracellular. Residues 522 to 545 (VHYLYFAIILFFCSGFLTLAISRC) traverse the membrane as a helical segment. Residues 546–649 (TAPIPQKHLH…DISEDPSWAR (104 aa)) are Cytoplasmic-facing. The chain crosses the membrane as a helical span at residues 650-668 (VVNLNALLMMTVAVFLWGF). Residues 669 to 670 (YA) are Extracellular-facing.

It belongs to the sodium:solute symporter (SSF) (TC 2.A.21) family. In terms of assembly, forms a heterodimer (via TM13) with PDZK1IP1 (via N-terminal transmembrane helix); this interaction enhances SLC5A2 transporter activity. Glycosylated at a single site. Kidney, in proximal tubule S1 segments.

It localises to the apical cell membrane. The enzyme catalyses D-glucose(out) + Na(+)(out) = D-glucose(in) + Na(+)(in). Enhanced by the interaction with PDZK1IP1/MAP17. Its function is as follows. Electrogenic Na(+)-coupled sugar symporter that actively transports D-glucose at the plasma membrane, with a Na(+) to sugar coupling ratio of 1:1. Transporter activity is driven by a transmembrane Na(+) electrochemical gradient set by the Na(+)/K(+) pump. Unlike SLC5A1/SGLT1, requires the auxiliary protein PDZK1IP1/MAP17 for full transporter activity. Has a primary role in D-glucose reabsorption from glomerular filtrate across the brush border of the early proximal tubules of the kidney. The chain is Sodium/glucose cotransporter 2 (Slc5a2) from Rattus norvegicus (Rat).